The primary structure comprises 79 residues: uncharacterized protein (79 aa).

This is an uncharacterized protein from Ovis aries (Sheep).